The chain runs to 207 residues: Dephospho-CoA kinase (207 aa).

Residues 10 to 207 form the DPCK domain; that stretch reads TLGLTGGIGS…FYLTLRGGQS (198 aa). Position 18–23 (18–23) interacts with ATP; it reads GSGKSA.

It belongs to the CoaE family.

The protein localises to the cytoplasm. It catalyses the reaction 3'-dephospho-CoA + ATP = ADP + CoA + H(+). The protein operates within cofactor biosynthesis; coenzyme A biosynthesis; CoA from (R)-pantothenate: step 5/5. Its function is as follows. Catalyzes the phosphorylation of the 3'-hydroxyl group of dephosphocoenzyme A to form coenzyme A. This chain is Dephospho-CoA kinase, found in Pseudomonas fluorescens (strain ATCC BAA-477 / NRRL B-23932 / Pf-5).